Here is a 502-residue protein sequence, read N- to C-terminus: Probable cytosol aminopeptidase (502 aa).

Residues lysine 265 and aspartate 270 each contribute to the Mn(2+) site. The active site involves lysine 277. Residues aspartate 288, aspartate 347, and glutamate 349 each coordinate Mn(2+). The active site involves arginine 351.

It belongs to the peptidase M17 family. Requires Mn(2+) as cofactor.

It is found in the cytoplasm. It carries out the reaction Release of an N-terminal amino acid, Xaa-|-Yaa-, in which Xaa is preferably Leu, but may be other amino acids including Pro although not Arg or Lys, and Yaa may be Pro. Amino acid amides and methyl esters are also readily hydrolyzed, but rates on arylamides are exceedingly low.. The catalysed reaction is Release of an N-terminal amino acid, preferentially leucine, but not glutamic or aspartic acids.. Functionally, presumably involved in the processing and regular turnover of intracellular proteins. Catalyzes the removal of unsubstituted N-terminal amino acids from various peptides. This chain is Probable cytosol aminopeptidase, found in Rickettsia bellii (strain OSU 85-389).